The following is a 471-amino-acid chain: 3-isopropylmalate dehydratase large subunit (471 aa).

[4Fe-4S] cluster is bound by residues cysteine 349, cysteine 410, and cysteine 413.

It belongs to the aconitase/IPM isomerase family. LeuC type 1 subfamily. In terms of assembly, heterodimer of LeuC and LeuD. [4Fe-4S] cluster is required as a cofactor.

The enzyme catalyses (2R,3S)-3-isopropylmalate = (2S)-2-isopropylmalate. It participates in amino-acid biosynthesis; L-leucine biosynthesis; L-leucine from 3-methyl-2-oxobutanoate: step 2/4. Functionally, catalyzes the isomerization between 2-isopropylmalate and 3-isopropylmalate, via the formation of 2-isopropylmaleate. The chain is 3-isopropylmalate dehydratase large subunit from Chromobacterium violaceum (strain ATCC 12472 / DSM 30191 / JCM 1249 / CCUG 213 / NBRC 12614 / NCIMB 9131 / NCTC 9757 / MK).